The following is a 401-amino-acid chain: Acetate kinase (401 aa).

Mg(2+) is bound at residue N9. K16 is an ATP binding site. R88 is a substrate binding site. Catalysis depends on D147, which acts as the Proton donor/acceptor. Residues 207 to 211 (HLGNG), 282 to 284 (DCR), and 333 to 337 (GIGEN) contribute to the ATP site. E388 is a binding site for Mg(2+).

The protein belongs to the acetokinase family. Homodimer. Mg(2+) is required as a cofactor. The cofactor is Mn(2+).

It localises to the cytoplasm. The enzyme catalyses acetate + ATP = acetyl phosphate + ADP. It functions in the pathway metabolic intermediate biosynthesis; acetyl-CoA biosynthesis; acetyl-CoA from acetate: step 1/2. Its function is as follows. Catalyzes the formation of acetyl phosphate from acetate and ATP. Can also catalyze the reverse reaction. The chain is Acetate kinase from Haemophilus influenzae (strain 86-028NP).